The primary structure comprises 679 residues: Glycine--tRNA ligase beta subunit (679 aa).

Belongs to the class-II aminoacyl-tRNA synthetase family. In terms of assembly, tetramer of two alpha and two beta subunits.

Its subcellular location is the cytoplasm. It catalyses the reaction tRNA(Gly) + glycine + ATP = glycyl-tRNA(Gly) + AMP + diphosphate. The protein is Glycine--tRNA ligase beta subunit of Streptococcus equi subsp. zooepidemicus (strain H70).